The primary structure comprises 505 residues: Pentatricopeptide repeat-containing protein At2g17033 (505 aa).

PPR repeat units follow at residues 243-277, 278-312, and 313-347; these read KTQAYKSMVSGLCNMDQPHDAERVIEEMRMEKIKP, GLFEYKSVLYGYGRLGLFDDMNRVVHRMGTEGHKI, and DTVCSNMVLSSYGAHDALPQMGSWLQKLKGFNVPF. The Smr domain occupies 413–503; it reads LDLHGMHLSS…AKGKTVKEWL (91 aa).

It belongs to the PPR family. P subfamily.

In Arabidopsis thaliana (Mouse-ear cress), this protein is Pentatricopeptide repeat-containing protein At2g17033.